A 95-amino-acid polypeptide reads, in one-letter code: Large ribosomal subunit protein eL31 (95 aa).

This sequence belongs to the eukaryotic ribosomal protein eL31 family. As to quaternary structure, part of the 50S ribosomal subunit.

This Pyrococcus furiosus (strain ATCC 43587 / DSM 3638 / JCM 8422 / Vc1) protein is Large ribosomal subunit protein eL31.